The chain runs to 247 residues: Protein lin-28 homolog B (247 aa).

Residues 1-22 form a disordered region; the sequence is MAEGGASKGEEPEKLPGLAEDE. The region spanning 27–100 is the CSD domain; the sequence is HGTGHCKWFN…GLESIRVTGP (74 aa). Residues Ser-94, Ser-103, and Ser-108 each carry the phosphoserine modification. Residues 96–124 form a disordered region; sequence RVTGPGGSPCLGSERRPKGKTLQKRKPKG. Basic residues predominate over residues 112–123; the sequence is PKGKTLQKRKPK. CCHC-type zinc fingers lie at residues 125 to 142 and 147 to 164; these read DRCY…ECSL and KKCH…NCPH. 8 residues coordinate Zn(2+): Cys-127, Cys-130, His-135, Cys-140, Cys-149, Cys-152, His-157, and Cys-162. A compositionally biased stretch (polar residues) spans 173–186; it reads SSQGRQEAESQPCS. The interval 173-247 is disordered; sequence SSQGRQEAES…GPLIQKRKKT (75 aa). Over residues 207–219 the composition is skewed to basic and acidic residues; the sequence is VKSEMAEHSDRSP.

This sequence belongs to the lin-28 family.

Its subcellular location is the nucleus. It localises to the nucleolus. Its function is as follows. Suppressor of microRNA (miRNA) biogenesis, including that of let-7 and possibly of miR107, miR-143 and miR-200c. Binds primary let-7 transcripts (pri-let-7), including pri-let-7g and pri-let-7a-1, and sequester them in the nucleolus, away from the microprocessor complex, hence preventing their processing into mature miRNA. Does not act on pri-miR21. The repression of let-7 expression is required for normal development and contributes to maintain the pluripotent state of embryonic stem cells by preventing let-7-mediated differentiation. When overexpressed, recruits ZCCHC11/TUT4 uridylyltransferase to pre-let-7 transcripts, leading to their terminal uridylation and degradation. This activity might not be relevant in vivo, as LIN28B-mediated inhibition of let-7 miRNA maturation appears to be ZCCHC11-independent. Interaction with target pre-miRNAs occurs via an 5'-GGAG-3' motif in the pre-miRNA terminal loop. Mediates MYC-induced let-7 repression. When overexpressed, may stimulate growth of carcinoma cell lines. This Mus musculus (Mouse) protein is Protein lin-28 homolog B (Lin28b).